The chain runs to 280 residues: uncharacterized protein (280 aa).

A chloroplast-targeting transit peptide spans 1 to 51 (MATSLLLRHSSAVFFSQSSFFTKNKSFRSFTSIKMEKGEAENAVKTKKVFV).

It belongs to the NAD(P)-dependent epimerase/dehydratase family.

Its subcellular location is the plastid. The protein localises to the chloroplast. It is found in the plastoglobule. This is an uncharacterized protein from Arabidopsis thaliana (Mouse-ear cress).